The chain runs to 100 residues: Large ribosomal subunit protein uL23 (100 aa).

This sequence belongs to the universal ribosomal protein uL23 family. Part of the 50S ribosomal subunit. Contacts protein L29, and trigger factor when it is bound to the ribosome.

One of the early assembly proteins it binds 23S rRNA. One of the proteins that surrounds the polypeptide exit tunnel on the outside of the ribosome. Forms the main docking site for trigger factor binding to the ribosome. The polypeptide is Large ribosomal subunit protein uL23 (Buchnera aphidicola subsp. Schizaphis graminum (strain Sg)).